Here is a 292-residue protein sequence, read N- to C-terminus: ATP synthase gamma chain (292 aa).

Belongs to the ATPase gamma chain family. F-type ATPases have 2 components, CF(1) - the catalytic core - and CF(0) - the membrane proton channel. CF(1) has five subunits: alpha(3), beta(3), gamma(1), delta(1), epsilon(1). CF(0) has three main subunits: a, b and c.

It localises to the cell inner membrane. Produces ATP from ADP in the presence of a proton gradient across the membrane. The gamma chain is believed to be important in regulating ATPase activity and the flow of protons through the CF(0) complex. This chain is ATP synthase gamma chain, found in Brucella canis (strain ATCC 23365 / NCTC 10854 / RM-666).